We begin with the raw amino-acid sequence, 184 residues long: Mitochondrial translation release factor in rescue (184 aa).

Residues 1–98 constitute a mitochondrion transit peptide; sequence MSSRSTWALL…HVPSGIVVKC (98 aa). The interval 60–124 is GGQ domain; that stretch reads ESELEEQFVK…LQEKVDVFYN (65 aa). The GGQ signature appears at 74 to 76; that stretch reads GGQ. An N5-methylglutamine modification is found at glutamine 76. A coiled-coil region spans residues 130 to 178; it reads VHKEKLEAERRKRERKKRAKETLEKKKLLKELREASQNITEKKADADGI. Residues 132-184 are disordered; sequence KEKLEAERRKRERKKRAKETLEKKKLLKELREASQNITEKKADADGIPRGFQE. A compositionally biased stretch (basic and acidic residues) spans 149–184; sequence KETLEKKKLLKELREASQNITEKKADADGIPRGFQE.

This sequence belongs to the prokaryotic/mitochondrial release factor family. In terms of assembly, interacts (via C-terminus) with MTRES1 (via S4 domain). Associates with mitoribosomal S39 large subunit, peptidyl tRNA and nascent chain. Post-translationally, methylation of glutamine in the GGQ triplet by HEMK1.

It is found in the mitochondrion. In terms of biological role, part of a mitoribosome-associated quality control pathway that prevents aberrant translation by responding to interruptions during elongation. As heterodimer with MTRES1, ejects the unfinished nascent chain and peptidyl transfer RNA (tRNA), respectively, from stalled ribosomes. Recruitment of mitoribosome biogenesis factors to these quality control intermediates suggests additional roles for MTRES1 and MTRF during mitoribosome rescue. In Mus musculus (Mouse), this protein is Mitochondrial translation release factor in rescue.